Consider the following 584-residue polypeptide: UBX domain-containing protein 2 (584 aa).

Residues 1-80 (MPVVNHEDSE…PTQTSTPMAE (80 aa)) lie on the Cytoplasmic side of the membrane. A helical transmembrane segment spans residues 81–101 (TLVPPALGPRPLLFTASLPVV). The Lumenal portion of the chain corresponds to 102–151 (RPLPANFRNDFRTIGLNGRSNTVWSMFESFSYDGNPFLFILLLIPRIINR). The helical transmembrane segment at 152-172 (LSATIFTFFCTLLSLHSISGG) threads the bilayer. The Cytoplasmic segment spans residues 173-584 (GNSGKPKISK…DEEDEENEEQ (412 aa)). The UBX domain occupies 426-570 (ETTGKQATLQ…WPNGSLLVEA (145 aa)).

As to quaternary structure, component of the DOA10 ubiquitin ligase complex which contains E3 ligase SSM4/DOA10 and CDC48-binding protein UBX2/SEL1. Component of the HRD1 ubiquitin ligase complex which contains the E3 ligase HRD1, its cofactors HRD3, USA1 and DER1, substrate recruiting factor YOS9 and UBX2. In ERAD-L, HRD3 and YOS9 jointly bind misfolded glycoproteins in the endoplasmic reticulum (ER) lumen. Movement of ERAD-L substrates through the ER membrane is facilitated by HRD1 and DER1 which have lateral gates facing each other and which distort the membrane region between the lateral gates, making it much thinner than a normal phospholipid bilayer. Substrates insert into the membrane as a hairpin loop with one strand interacting with DER1 and the other with HRD1. Both the DOA10 and HRD1 ubiquitin ligase complexes interact with the heterotrimeric CDC48-NPL4-UFD1 ATPase complex which is recruited by UBX2 via its interaction with CDC48 and which moves ubiquitinated substrates to the cytosol for targeting to the proteasome.

It localises to the endoplasmic reticulum membrane. In terms of biological role, integral endoplasmic reticulum membrane protein that coordinates the assembly of the ER-associated protein degradation (ERAD) machinery at the ER membrane. Mediates binding of CDC48 to the E3 ubiquitin ligases SSM4/DOA10 and HRD1, and to ERAD substrates. Component of the DOA10 ubiquitin ligase complex, which is part of the ERAD-C pathway responsible for the rapid degradation of membrane proteins with misfolded cytoplasmic domains. ERAD-C substrates are ubiquitinated through DOA10 in conjunction with the E2 ubiquitin-conjugating enzymes UBC6 and UBC7-CUE1. Also a component of the HRD1 ubiquitin ligase complex, which is part of the ERAD-L and ERAD-M pathways responsible for the rapid degradation of soluble lumenal and membrane proteins with misfolded lumenal domains (ERAD-L), or ER-membrane proteins with misfolded transmembrane domains (ERAD-M). ERAD-L substrates are ubiquitinated through HRD1 in conjunction with the E2 ubiquitin-conjugating enzymes UBC1 and UBC7-CUE1. Ubiquitinated substrates are then removed to the cytosol via the action of the CDC48-NPL4-UFD1 ATPase complex and targeted to the proteasome. The protein is UBX domain-containing protein 2 (UBX2) of Saccharomyces cerevisiae (strain ATCC 204508 / S288c) (Baker's yeast).